We begin with the raw amino-acid sequence, 89 residues long: Small ribosomal subunit protein uS15 (89 aa).

It belongs to the universal ribosomal protein uS15 family. As to quaternary structure, part of the 30S ribosomal subunit. Forms a bridge to the 50S subunit in the 70S ribosome, contacting the 23S rRNA.

In terms of biological role, one of the primary rRNA binding proteins, it binds directly to 16S rRNA where it helps nucleate assembly of the platform of the 30S subunit by binding and bridging several RNA helices of the 16S rRNA. Forms an intersubunit bridge (bridge B4) with the 23S rRNA of the 50S subunit in the ribosome. This is Small ribosomal subunit protein uS15 from Pectobacterium carotovorum subsp. carotovorum (strain PC1).